The following is a 125-amino-acid chain: Ribonuclease P protein component (125 aa).

The protein belongs to the RnpA family. As to quaternary structure, consists of a catalytic RNA component (M1 or rnpB) and a protein subunit.

The enzyme catalyses Endonucleolytic cleavage of RNA, removing 5'-extranucleotides from tRNA precursor.. RNaseP catalyzes the removal of the 5'-leader sequence from pre-tRNA to produce the mature 5'-terminus. It can also cleave other RNA substrates such as 4.5S RNA. The protein component plays an auxiliary but essential role in vivo by binding to the 5'-leader sequence and broadening the substrate specificity of the ribozyme. This chain is Ribonuclease P protein component, found in Oleidesulfovibrio alaskensis (strain ATCC BAA-1058 / DSM 17464 / G20) (Desulfovibrio alaskensis).